The primary structure comprises 198 residues: MYEYIKGEYMGINKDYIIIENNGIGYKIFTSGATMSSMPCCGEKIKIYIEQIVREDFIGLYGFESLEELDMFKLLLSINGVGAKAALSLLSISRLNNLKYAIITGDEKHLCRGTGIGKKIAGRIILELKDKLKSDELLNCIDEFDDVTQDNSLALSEALSALISLGYTEKEAEKVLKDVDKSESVENIIKSALVKLMG.

The interval 1–64 is domain I; the sequence is MYEYIKGEYM…EDFIGLYGFE (64 aa). The segment at 65–143 is domain II; sequence SLEELDMFKL…SDELLNCIDE (79 aa). Residues 144–154 form a flexible linker region; the sequence is FDDVTQDNSLA. A domain III region spans residues 154–198; the sequence is ALSEALSALISLGYTEKEAEKVLKDVDKSESVENIIKSALVKLMG.

It belongs to the RuvA family. Homotetramer. Forms an RuvA(8)-RuvB(12)-Holliday junction (HJ) complex. HJ DNA is sandwiched between 2 RuvA tetramers; dsDNA enters through RuvA and exits via RuvB. An RuvB hexamer assembles on each DNA strand where it exits the tetramer. Each RuvB hexamer is contacted by two RuvA subunits (via domain III) on 2 adjacent RuvB subunits; this complex drives branch migration. In the full resolvosome a probable DNA-RuvA(4)-RuvB(12)-RuvC(2) complex forms which resolves the HJ.

It is found in the cytoplasm. The RuvA-RuvB-RuvC complex processes Holliday junction (HJ) DNA during genetic recombination and DNA repair, while the RuvA-RuvB complex plays an important role in the rescue of blocked DNA replication forks via replication fork reversal (RFR). RuvA specifically binds to HJ cruciform DNA, conferring on it an open structure. The RuvB hexamer acts as an ATP-dependent pump, pulling dsDNA into and through the RuvAB complex. HJ branch migration allows RuvC to scan DNA until it finds its consensus sequence, where it cleaves and resolves the cruciform DNA. This chain is Holliday junction branch migration complex subunit RuvA, found in Clostridium botulinum (strain Alaska E43 / Type E3).